We begin with the raw amino-acid sequence, 260 residues long: Cytosolic Fe-S cluster assembly factor Nubp2 homolog 1 (260 aa).

Position 14 to 21 (14 to 21) interacts with ATP; that stretch reads GKGGVGKS. 2 residues coordinate [4Fe-4S] cluster: C188 and C191.

This sequence belongs to the Mrp/NBP35 ATP-binding proteins family. NUBP2/CFD1 subfamily. In terms of assembly, heterotetramer of 2 Nubp1 and 2 Nubp2 chains. [4Fe-4S] cluster serves as cofactor.

It localises to the cytoplasm. Component of the cytosolic iron-sulfur (Fe/S) protein assembly (CIA) machinery. Required for maturation of extramitochondrial Fe-S proteins. The Nubp1-Nubp2 heterotetramer forms a Fe-S scaffold complex, mediating the de novo assembly of an Fe-S cluster and its transfer to target apoproteins. This is Cytosolic Fe-S cluster assembly factor Nubp2 homolog 1 from Drosophila yakuba (Fruit fly).